We begin with the raw amino-acid sequence, 543 residues long: uncharacterized protein (543 aa).

A run of 6 helical transmembrane segments spans residues 47 to 67 (FSLLAVFGQSFGSMGLCPSLV), 79 to 99 (GGMVWSWFVGATCLLPIAFAL), 126 to 146 (AFLSWFLGYVLALAYSTGFAS), 176 to 196 (IYVALSFACSALIVLPTKFLA), 198 to 218 (FSSFNVVFQICTILIFIISLA), and 249 to 269 (FILCFTTPVWVLSGFESCATI). N-linked (GlcNAc...) asparagine glycosylation is present at N275. The next 3 helical transmembrane spans lie at 282 to 302 (IAIISSLTVSLFMGFCIMITI), 335 to 355 (AVGVSAVLIIALCFNCSALCL), and 384 to 404 (IPLNAILLVNLYTIIVGLLML). A glycan (N-linked (GlcNAc...) asparagine) is linked at N406. 3 consecutive transmembrane segments (helical) span residues 410–430 (ISSIFNLAIIAFFISYSLPLV), 452–472 (ISIVAVAWLWFMALMLLFPSY), and 480–500 (MNWAIVVLGFTVFFCVGYYYL). An N-linked (GlcNAc...) asparagine glycan is attached at N519.

It belongs to the amino acid-polyamine-organocation (APC) superfamily.

Its subcellular location is the membrane. This is an uncharacterized protein from Schizosaccharomyces pombe (strain 972 / ATCC 24843) (Fission yeast).